Reading from the N-terminus, the 40-residue chain is Photosystem II reaction center protein J (40 aa).

Residues 8-28 (IPLWLIGTVTGIPVIGLIGIF) form a helical membrane-spanning segment.

It belongs to the PsbJ family. As to quaternary structure, PSII is composed of 1 copy each of membrane proteins PsbA, PsbB, PsbC, PsbD, PsbE, PsbF, PsbH, PsbI, PsbJ, PsbK, PsbL, PsbM, PsbT, PsbX, PsbY, PsbZ, Psb30/Ycf12, at least 3 peripheral proteins of the oxygen-evolving complex and a large number of cofactors. It forms dimeric complexes.

It is found in the plastid. The protein resides in the chloroplast thylakoid membrane. Functionally, one of the components of the core complex of photosystem II (PSII). PSII is a light-driven water:plastoquinone oxidoreductase that uses light energy to abstract electrons from H(2)O, generating O(2) and a proton gradient subsequently used for ATP formation. It consists of a core antenna complex that captures photons, and an electron transfer chain that converts photonic excitation into a charge separation. In Vitis vinifera (Grape), this protein is Photosystem II reaction center protein J.